The sequence spans 295 residues: Probable lipid kinase YegS-like (295 aa).

A DAGKc domain is found at 1–129; that stretch reads MQGRKAMLVL…IDLGQAGDQL (129 aa). Residues T39, 65-71, and T92 contribute to the ATP site; that span reads GDGTLRD. Mg(2+) contacts are provided by M210, D213, and L215. E264 acts as the Proton acceptor in catalysis.

This sequence belongs to the diacylglycerol/lipid kinase family. YegS lipid kinase subfamily. Mg(2+) is required as a cofactor. Requires Ca(2+) as cofactor.

It is found in the cytoplasm. Its function is as follows. Probably phosphorylates lipids; the in vivo substrate is unknown. This Pseudomonas putida (strain ATCC 47054 / DSM 6125 / CFBP 8728 / NCIMB 11950 / KT2440) protein is Probable lipid kinase YegS-like.